Reading from the N-terminus, the 264-residue chain is Carbonic anhydrase (264 aa).

Positions 1–33 (MSSTLYRRQLLKLLGMSVLGTSFSSCVTSPARA) form a signal peptide, tat-type signal. The 229-residue stretch at 36–264 (VNWGYIGKVG…LNDRLVIEAI (229 aa)) folds into the Alpha-carbonic anhydrase domain. H127, H129, and H146 together coordinate Zn(2+). A substrate-binding site is contributed by 214-215 (TT).

Belongs to the alpha-carbonic anhydrase family. Zn(2+) is required as a cofactor. In terms of processing, predicted to be exported by the Tat system. The position of the signal peptide cleavage has not been experimentally proven.

The catalysed reaction is hydrogencarbonate + H(+) = CO2 + H2O. Functionally, reversible hydration of carbon dioxide. In Nostoc sp. (strain PCC 7120 / SAG 25.82 / UTEX 2576), this protein is Carbonic anhydrase (ecaA).